The sequence spans 277 residues: uncharacterized protein (277 aa).

2 disordered regions span residues 33–168 (KNDN…VTTR) and 210–277 (NKLL…PIEF). Basic and acidic residues predominate over residues 34 to 45 (NDNDERTAHEES). The span at 86-99 (LKSKSKRKTKKGGS) shows a compositional bias: basic residues. 3 stretches are compositionally biased toward basic and acidic residues: residues 100-113 (KPRE…KHIV), 151-168 (AKEL…VTTR), and 216-230 (TNED…NKEK). Positions 231 to 241 (DRKRRERRTAR) are enriched in basic residues. The segment covering 242-258 (RKDERKQEKKQEKKQDN) has biased composition (basic and acidic residues). Polar residues predominate over residues 259–271 (KTSQSFPSSTDMN).

It localises to the cytoplasm. This is an uncharacterized protein from Saccharomyces cerevisiae (strain ATCC 204508 / S288c) (Baker's yeast).